The sequence spans 314 residues: Ribonuclease Z (314 aa).

Zn(2+) is bound by residues His61, His63, Asp65, His66, His139, Asp211, and His269. The active-site Proton acceptor is Asp65.

The protein belongs to the RNase Z family. In terms of assembly, homodimer. Zn(2+) is required as a cofactor.

It carries out the reaction Endonucleolytic cleavage of RNA, removing extra 3' nucleotides from tRNA precursor, generating 3' termini of tRNAs. A 3'-hydroxy group is left at the tRNA terminus and a 5'-phosphoryl group is left at the trailer molecule.. Zinc phosphodiesterase, which displays some tRNA 3'-processing endonuclease activity. Probably involved in tRNA maturation, by removing a 3'-trailer from precursor tRNA. The protein is Ribonuclease Z of Gemmatimonas aurantiaca (strain DSM 14586 / JCM 11422 / NBRC 100505 / T-27).